The following is a 717-amino-acid chain: DNA ligase (717 aa).

Residues 41–45, 90–91, and glutamate 124 each bind NAD(+); these read DARYD and SL. The active-site N6-AMP-lysine intermediate is lysine 126. 4 residues coordinate NAD(+): arginine 147, glutamate 183, lysine 299, and lysine 323. 4 residues coordinate Zn(2+): cysteine 428, cysteine 431, cysteine 446, and cysteine 452. The region spanning 636-717 is the BRCT domain; that stretch reads ADYSPVAGKT…WLQLINEHHI (82 aa).

Belongs to the NAD-dependent DNA ligase family. LigA subfamily. The cofactor is Mg(2+). It depends on Mn(2+) as a cofactor.

The catalysed reaction is NAD(+) + (deoxyribonucleotide)n-3'-hydroxyl + 5'-phospho-(deoxyribonucleotide)m = (deoxyribonucleotide)n+m + AMP + beta-nicotinamide D-nucleotide.. Functionally, DNA ligase that catalyzes the formation of phosphodiester linkages between 5'-phosphoryl and 3'-hydroxyl groups in double-stranded DNA using NAD as a coenzyme and as the energy source for the reaction. It is essential for DNA replication and repair of damaged DNA. The protein is DNA ligase of Bartonella bacilliformis (strain ATCC 35685 / KC583 / Herrer 020/F12,63).